Consider the following 101-residue polypeptide: Ubiquitin-related modifier 1 homolog 1 (101 aa).

Gly-101 bears the 1-thioglycine mark. Residue Gly-101 forms a Glycyl lysine isopeptide (Gly-Lys) (interchain with K-? in acceptor proteins) linkage.

Belongs to the URM1 family. Post-translationally, C-terminal thiocarboxylation occurs in 2 steps, it is first acyl-adenylated (-COAMP) via the hesA/moeB/thiF part of the MOCS3 homolog, then thiocarboxylated (-COSH) via the rhodanese domain of the MOCS3 homolog.

Its subcellular location is the cytoplasm. The protein operates within tRNA modification; 5-methoxycarbonylmethyl-2-thiouridine-tRNA biosynthesis. Its function is as follows. Acts as a sulfur carrier required for 2-thiolation of mcm(5)S(2)U at tRNA wobble positions of cytosolic tRNA(Lys), tRNA(Glu) and tRNA(Gln). Serves as sulfur donor in tRNA 2-thiolation reaction by being thiocarboxylated (-COSH) at its C-terminus by MOCS3. The sulfur is then transferred to tRNA to form 2-thiolation of mcm(5)S(2)U. Also acts as a ubiquitin-like protein (UBL) that is covalently conjugated via an isopeptide bond to lysine residues of target proteins. The thiocarboxylated form serves as substrate for conjugation and oxidative stress specifically induces the formation of UBL-protein conjugates. This chain is Ubiquitin-related modifier 1 homolog 1, found in Arabidopsis thaliana (Mouse-ear cress).